Here is a 92-residue protein sequence, read N- to C-terminus: C-C motif chemokine 4 (92 aa).

A signal peptide spans 1–23 (MKLCVTVLSLLVLVAAFCSPALS). Intrachain disulfides connect Cys34–Cys58 and Cys35–Cys74.

Belongs to the intercrine beta (chemokine CC) family. As to quaternary structure, homodimer. Interacts with CCR5.

It is found in the secreted. Functionally, monokine with inflammatory and chemokinetic properties. This is C-C motif chemokine 4 (CCL4) from Sus scrofa (Pig).